The chain runs to 130 residues: Small ribosomal subunit protein uS11 (130 aa).

The protein belongs to the universal ribosomal protein uS11 family. Part of the 30S ribosomal subunit. Interacts with proteins S7 and S18. Binds to IF-3.

Functionally, located on the platform of the 30S subunit, it bridges several disparate RNA helices of the 16S rRNA. Forms part of the Shine-Dalgarno cleft in the 70S ribosome. This is Small ribosomal subunit protein uS11 from Sulfurimonas denitrificans (strain ATCC 33889 / DSM 1251) (Thiomicrospira denitrificans (strain ATCC 33889 / DSM 1251)).